Consider the following 571-residue polypeptide: Vesicle-associated protein 1-4 (571 aa).

In terms of domain architecture, MSP 1 spans 1–126; sequence MSTDELLTFD…EETIFKIIYV (126 aa). The disordered stretch occupies residues 132–154; the sequence is QSPVQEGLEDGSSPSASVSDKGN. Positions 143–153 are enriched in polar residues; it reads SSPSASVSDKG. Positions 176 to 296 constitute an MSP 2 domain; that stretch reads LLIIDPVDVQ…EETRLKVMYV (121 aa). The segment at 297 to 322 is disordered; the sequence is TPPQPPSPVQEGTEEGSSPRASVSDN. Residues 311–322 are compositionally biased toward polar residues; the sequence is EGSSPRASVSDN. A TIR domain is found at 356–493; it reads PQYQVFINFR…KWKEALSSVF (138 aa). The active site involves glutamate 430.

It belongs to the VAMP-associated protein (VAP) (TC 9.B.17) family.

It carries out the reaction NAD(+) + H2O = ADP-D-ribose + nicotinamide + H(+). Its function is as follows. May play a role in vesicle trafficking. The chain is Vesicle-associated protein 1-4 (PVA14) from Arabidopsis thaliana (Mouse-ear cress).